We begin with the raw amino-acid sequence, 1070 residues long: DNA-directed RNA polymerase subunit beta (1070 aa).

The protein belongs to the RNA polymerase beta chain family. In plastids the minimal PEP RNA polymerase catalytic core is composed of four subunits: alpha, beta, beta', and beta''. When a (nuclear-encoded) sigma factor is associated with the core the holoenzyme is formed, which can initiate transcription.

Its subcellular location is the plastid. It localises to the chloroplast. It carries out the reaction RNA(n) + a ribonucleoside 5'-triphosphate = RNA(n+1) + diphosphate. In terms of biological role, DNA-dependent RNA polymerase catalyzes the transcription of DNA into RNA using the four ribonucleoside triphosphates as substrates. The protein is DNA-directed RNA polymerase subunit beta of Phalaenopsis aphrodite subsp. formosana (Moth orchid).